Consider the following 596-residue polypeptide: Sphingomyelinase C 1 (596 aa).

An N-terminal signal peptide occupies residues 1–36; the sequence is MITKRNIPCKKNWKYKKKSISLTLITICYMFLFLTS. The segment at 63–118 is disordered; sequence KIEDSTNTDPSSNVNEEDENSINANANDNAPSDSDSSNPRSPDKNPVNPTSPNSSS. Polar residues predominate over residues 67–76; that stretch reads STNTDPSSNV. Residues 83–118 are compositionally biased toward low complexity; that stretch reads SINANANDNAPSDSDSSNPRSPDKNPVNPTSPNSSS.

It is found in the secreted. The catalysed reaction is a sphingomyelin + H2O = phosphocholine + an N-acylsphing-4-enine + H(+). The chain is Sphingomyelinase C 1 (sph1) from Leptospira interrogans serogroup Icterohaemorrhagiae serovar copenhageni (strain Fiocruz L1-130).